We begin with the raw amino-acid sequence, 435 residues long: tRNA-2-methylthio-N(6)-dimethylallyladenosine synthase (435 aa).

The 116-residue stretch at 5–120 (KKLFIETLGC…ISEVLHKERA (116 aa)) folds into the MTTase N-terminal domain. [4Fe-4S] cluster is bound by residues Cys-14, Cys-51, Cys-83, Cys-152, Cys-156, and Cys-159. Residues 138–372 (RTSPYKAYIN…NLAVNILDEK (235 aa)) form the Radical SAM core domain. One can recognise a TRAM domain in the interval 374 to 435 (KTHLGKIYRV…RTILSGEIVG (62 aa)).

The protein belongs to the methylthiotransferase family. MiaB subfamily. As to quaternary structure, monomer. [4Fe-4S] cluster is required as a cofactor.

Its subcellular location is the cytoplasm. It catalyses the reaction N(6)-dimethylallyladenosine(37) in tRNA + (sulfur carrier)-SH + AH2 + 2 S-adenosyl-L-methionine = 2-methylsulfanyl-N(6)-dimethylallyladenosine(37) in tRNA + (sulfur carrier)-H + 5'-deoxyadenosine + L-methionine + A + S-adenosyl-L-homocysteine + 2 H(+). In terms of biological role, catalyzes the methylthiolation of N6-(dimethylallyl)adenosine (i(6)A), leading to the formation of 2-methylthio-N6-(dimethylallyl)adenosine (ms(2)i(6)A) at position 37 in tRNAs that read codons beginning with uridine. The sequence is that of tRNA-2-methylthio-N(6)-dimethylallyladenosine synthase from Sulfurimonas denitrificans (strain ATCC 33889 / DSM 1251) (Thiomicrospira denitrificans (strain ATCC 33889 / DSM 1251)).